Reading from the N-terminus, the 608-residue chain is Preterminal protein (608 aa).

The Nuclear localization signal motif lies at 338–347; it reads RLPMRRRRRR. The segment at 342 to 377 is disordered; it reads RRRRRRAPPPPPMSEELSEPEVEAFPPASPPRRSFE. Ser536 carries the O-(5'-phospho-DNA)-serine modification.

Belongs to the adenoviridae terminal protein family. Heterodimer with the polymerase; this heterodimer binds to bp 9 to 18 of the genome. Interacts with host POU2F1; POU2F1 binds to the auxiliary sequences in the inverted terminal repeats and tethers the pTP-POL heterodimer to the origin DNA thereby participating in the assembly of the pre-initiation complex (POL-TP-DBP-NFIA-POU2F1). Post-translationally, preterminal protein is used to replicate viral genome, upon genomic encapsidation it is processed first into iTP and finally into TP by adenovirus protease.

It is found in the host nucleus matrix. In terms of biological role, protein covalently bound to the viral DNA that acts as a primer for viral genomic replication by DNA strand displacement. Assembles on the viral origin of replication in an initiation complex with viral polymerase, DBP, host NFIA and host POU2F1/OCT1. During initiation, the polymerase covalently couples the first dCTP with Ser-580 of pTP. The terminal protein stimulates the template activity over 20 fold compared to protein-free templates. Neo-synthesized viral genomes are linked to two preterminal proteins, one for each 5' end. These new genomes are encapsidated in the nucleus, and during capsid maturation by viral protease, preterminal protein is first cleaved into intermediary (iTP), then into mature TP. May play a role in host nuclear matrix localization of genomic DNA. The sequence is that of Preterminal protein from Canine adenovirus serotype 1 (strain CLL) (CAdV-1).